A 457-amino-acid chain; its full sequence is tRNA modification GTPase MnmE (457 aa).

Residues R23, E85, and R124 each coordinate (6S)-5-formyl-5,6,7,8-tetrahydrofolate. Residues 220–376 (GALVVLAGQV…LVTAIRAAVL (157 aa)) enclose the TrmE-type G domain. N230 lines the K(+) pocket. Residues 230–235 (NAGKSS), 249–255 (TDLPGTT), and 274–277 (DTAG) contribute to the GTP site. S234 contributes to the Mg(2+) binding site. 3 residues coordinate K(+): T249, L251, and T254. T255 is a binding site for Mg(2+). A (6S)-5-formyl-5,6,7,8-tetrahydrofolate-binding site is contributed by K457.

It belongs to the TRAFAC class TrmE-Era-EngA-EngB-Septin-like GTPase superfamily. TrmE GTPase family. Homodimer. Heterotetramer of two MnmE and two MnmG subunits. The cofactor is K(+).

It localises to the cytoplasm. Its function is as follows. Exhibits a very high intrinsic GTPase hydrolysis rate. Involved in the addition of a carboxymethylaminomethyl (cmnm) group at the wobble position (U34) of certain tRNAs, forming tRNA-cmnm(5)s(2)U34. This chain is tRNA modification GTPase MnmE, found in Nitratidesulfovibrio vulgaris (strain ATCC 29579 / DSM 644 / CCUG 34227 / NCIMB 8303 / VKM B-1760 / Hildenborough) (Desulfovibrio vulgaris).